The primary structure comprises 311 residues: Acetyl-coenzyme A carboxylase carboxyl transferase subunit beta (311 aa).

The CoA carboxyltransferase N-terminal domain maps to 27 to 296; it reads LWTKCGHCSA…AEAADAPEAG (270 aa). Residues Cys-31, Cys-34, Cys-50, and Cys-53 each coordinate Zn(2+). A C4-type zinc finger spans residues 31-53; the sequence is CGHCSAVLYRPELERNQEVCPKC. Residues 286 to 299 are compositionally biased toward low complexity; it reads AAEAADAPEAGEQP. Positions 286-311 are disordered; that stretch reads AAEAADAPEAGEQPSEATDPVGEHWD.

Belongs to the AccD/PCCB family. As to quaternary structure, acetyl-CoA carboxylase is a heterohexamer composed of biotin carboxyl carrier protein (AccB), biotin carboxylase (AccC) and two subunits each of ACCase subunit alpha (AccA) and ACCase subunit beta (AccD). Requires Zn(2+) as cofactor.

It localises to the cytoplasm. It carries out the reaction N(6)-carboxybiotinyl-L-lysyl-[protein] + acetyl-CoA = N(6)-biotinyl-L-lysyl-[protein] + malonyl-CoA. It participates in lipid metabolism; malonyl-CoA biosynthesis; malonyl-CoA from acetyl-CoA: step 1/1. Component of the acetyl coenzyme A carboxylase (ACC) complex. Biotin carboxylase (BC) catalyzes the carboxylation of biotin on its carrier protein (BCCP) and then the CO(2) group is transferred by the transcarboxylase to acetyl-CoA to form malonyl-CoA. In Alkalilimnicola ehrlichii (strain ATCC BAA-1101 / DSM 17681 / MLHE-1), this protein is Acetyl-coenzyme A carboxylase carboxyl transferase subunit beta.